We begin with the raw amino-acid sequence, 350 residues long: uncharacterized protein (350 aa).

Asp214, Asp225, His289, Glu318, and Glu332 together coordinate Mn(2+).

This sequence belongs to the peptidase M24B family. The cofactor is Mn(2+).

This is an uncharacterized protein from Staphylococcus saprophyticus subsp. saprophyticus (strain ATCC 15305 / DSM 20229 / NCIMB 8711 / NCTC 7292 / S-41).